We begin with the raw amino-acid sequence, 295 residues long: Acetylglutamate kinase (295 aa).

Substrate-binding positions include 66-67, arginine 88, and asparagine 193; that span reads GG.

The protein belongs to the acetylglutamate kinase family. ArgB subfamily.

Its subcellular location is the cytoplasm. The enzyme catalyses N-acetyl-L-glutamate + ATP = N-acetyl-L-glutamyl 5-phosphate + ADP. The protein operates within amino-acid biosynthesis; L-arginine biosynthesis; N(2)-acetyl-L-ornithine from L-glutamate: step 2/4. Catalyzes the ATP-dependent phosphorylation of N-acetyl-L-glutamate. This Sinorhizobium fredii (strain NBRC 101917 / NGR234) protein is Acetylglutamate kinase.